We begin with the raw amino-acid sequence, 337 residues long: Protoheme IX farnesyltransferase (337 aa).

Residues 1-17 (MPFSISKDTVSNQTTHV) are compositionally biased toward polar residues. Positions 1–41 (MPFSISKDTVSNQTTHVATAPASQRPDPVETKVEQEQGRPR) are disordered. A compositionally biased stretch (basic and acidic residues) spans 27–41 (DPVETKVEQEQGRPR). 8 helical membrane passes run 59–79 (IIEL…HGVP), 81–101 (LGLV…ANVF), 130–150 (SALI…GFGA), 153–173 (LSAA…SMLL), 196–216 (WTAV…IVFW), 250–270 (VAIQ…VLWP), 271–291 (VAHM…VFIV), and 311–331 (PMGL…AIAV).

It belongs to the UbiA prenyltransferase family. Protoheme IX farnesyltransferase subfamily.

It is found in the cell membrane. The enzyme catalyses heme b + (2E,6E)-farnesyl diphosphate + H2O = Fe(II)-heme o + diphosphate. The protein operates within porphyrin-containing compound metabolism; heme O biosynthesis; heme O from protoheme: step 1/1. Functionally, converts heme B (protoheme IX) to heme O by substitution of the vinyl group on carbon 2 of heme B porphyrin ring with a hydroxyethyl farnesyl side group. This is Protoheme IX farnesyltransferase from Cutibacterium acnes (strain DSM 16379 / KPA171202) (Propionibacterium acnes).